The following is a 178-amino-acid chain: Twist-related protein (178 aa).

The bHLH domain occupies Gln20 to Leu71.

As to quaternary structure, efficient DNA binding requires dimerization with another bHLH protein. Homodimer. Forms a heterodimer with hlh-2. In terms of tissue distribution, expressed in defecation-associated muscles and neuron-like cells in the head at the L1 stage. In later larvae, expressed in SM cells and their descendants. Not expressed in differentiated body wall or sex muscles.

It localises to the nucleus. Functionally, acts as a transcriptional regulator. Involved in postembryonic mesodermal cell fate specification. Activates ceh-24 and egl-15 during mesodermal patterning. This Caenorhabditis elegans protein is Twist-related protein (hlh-8).